A 603-amino-acid polypeptide reads, in one-letter code: Aspartate--tRNA(Asp/Asn) ligase (603 aa).

L-aspartate is bound at residue Glu182. An aspartate region spans residues 206–209 (QLFK). Arg228 contacts L-aspartate. Residues 228–230 (RDE) and Gln237 each bind ATP. His454 is a binding site for L-aspartate. Glu500 contacts ATP. Arg507 is a binding site for L-aspartate. 552-555 (GLDR) contacts ATP.

It belongs to the class-II aminoacyl-tRNA synthetase family. Type 1 subfamily. Homodimer.

The protein resides in the cytoplasm. It carries out the reaction tRNA(Asx) + L-aspartate + ATP = L-aspartyl-tRNA(Asx) + AMP + diphosphate. Aspartyl-tRNA synthetase with relaxed tRNA specificity since it is able to aspartylate not only its cognate tRNA(Asp) but also tRNA(Asn). Reaction proceeds in two steps: L-aspartate is first activated by ATP to form Asp-AMP and then transferred to the acceptor end of tRNA(Asp/Asn). The protein is Aspartate--tRNA(Asp/Asn) ligase of Aquifex aeolicus (strain VF5).